A 123-amino-acid chain; its full sequence is Major pollen allergen Ole e 10 (123 aa).

Positions Met-1–Thr-21 are cleaved as a signal peptide. The disordered stretch occupies residues Met-1–Trp-37. A disulfide bridge connects residues Cys-38 and Cys-101.

Post-translationally, the N-terminus is blocked. Phosphorylated at Ser-24 when expressed as a recombinant protein in a heterologous system. In terms of processing, not glycosylated. Post-translationally, contains two additional disulfide bonds. In terms of tissue distribution, expressed in mature and germinating pollen.

The protein localises to the cytoplasmic vesicle. Carbohydrate-binding protein binding preferentially 1,3-beta-glucans. May be involved in pollen tube wall re-formation during germination. This Olea europaea (Common olive) protein is Major pollen allergen Ole e 10.